Here is a 339-residue protein sequence, read N- to C-terminus: ATP-dependent 6-phosphofructokinase (339 aa).

ATP contacts are provided by residues Gly-11, 72–73 (RY), and 102–105 (GDGS). Residue Asp-103 coordinates Mg(2+). Substrate contacts are provided by residues 125 to 127 (TID), Arg-162, and 169 to 171 (MGR). The active-site Proton acceptor is Asp-127. ADP-binding positions include 185-187 (GAD) and 214-216 (KSH). Substrate is bound by residues Glu-223, Arg-245, and 251–254 (HVIR).

The protein belongs to the phosphofructokinase type A (PFKA) family. ATP-dependent PFK group I subfamily. Prokaryotic clade 'B1' sub-subfamily. As to quaternary structure, homotetramer. Mg(2+) serves as cofactor.

It localises to the cytoplasm. The catalysed reaction is beta-D-fructose 6-phosphate + ATP = beta-D-fructose 1,6-bisphosphate + ADP + H(+). It participates in carbohydrate degradation; glycolysis; D-glyceraldehyde 3-phosphate and glycerone phosphate from D-glucose: step 3/4. Allosterically activated by ADP and other diphosphonucleosides, and allosterically inhibited by phosphoenolpyruvate. Its function is as follows. Catalyzes the phosphorylation of D-fructose 6-phosphate to fructose 1,6-bisphosphate by ATP, the first committing step of glycolysis. The chain is ATP-dependent 6-phosphofructokinase from Streptococcus thermophilus (strain ATCC BAA-491 / LMD-9).